Consider the following 806-residue polypeptide: Leucine--tRNA ligase (806 aa).

Residues 38 to 48 (PYPSGEIHMGH) carry the 'HIGH' region motif. The 'KMSKS' region signature appears at 572–576 (KMSKS). Lysine 575 is an ATP binding site.

It belongs to the class-I aminoacyl-tRNA synthetase family.

It localises to the cytoplasm. It catalyses the reaction tRNA(Leu) + L-leucine + ATP = L-leucyl-tRNA(Leu) + AMP + diphosphate. The polypeptide is Leucine--tRNA ligase (Helicobacter acinonychis (strain Sheeba)).